We begin with the raw amino-acid sequence, 73 residues long: MARRCEICGKGPLVGNTVSHANNKNKTRSLPNLRSVRANLAGEIRHIRVCTRCLKAGKVVKAGRGRPTASAQA.

The protein belongs to the bacterial ribosomal protein bL28 family.

The polypeptide is Large ribosomal subunit protein bL28 (Anaeromyxobacter dehalogenans (strain 2CP-1 / ATCC BAA-258)).